Here is a 536-residue protein sequence, read N- to C-terminus: Glutamyl-tRNA(Gln) amidotransferase subunit B, mitochondrial (536 aa).

This sequence belongs to the GatB/GatE family. GatB subfamily. In terms of assembly, subunit of the heterotrimeric GatFAB amidotransferase (AdT) complex, composed of A, B and F subunits.

The protein resides in the mitochondrion. The enzyme catalyses L-glutamyl-tRNA(Gln) + L-glutamine + ATP + H2O = L-glutaminyl-tRNA(Gln) + L-glutamate + ADP + phosphate + H(+). Its function is as follows. Allows the formation of correctly charged Gln-tRNA(Gln) through the transamidation of misacylated Glu-tRNA(Gln) in the mitochondria. The reaction takes place in the presence of glutamine and ATP through an activated gamma-phospho-Glu-tRNA(Gln). This Vanderwaltozyma polyspora (strain ATCC 22028 / DSM 70294 / BCRC 21397 / CBS 2163 / NBRC 10782 / NRRL Y-8283 / UCD 57-17) (Kluyveromyces polysporus) protein is Glutamyl-tRNA(Gln) amidotransferase subunit B, mitochondrial.